The primary structure comprises 151 residues: uncharacterized protein (151 aa).

4Fe-4S ferredoxin-type domains follow at residues 4 to 32 (KIIV…ESRV), 33 to 63 (RKVD…YLKD), and 64 to 93 (GIPI…IKNR). Residues Cys-13, Cys-16, Cys-19, Cys-23, Cys-42, Cys-45, Cys-50, Cys-54, Cys-73, Cys-76, Cys-79, Cys-83, Cys-98, Cys-101, Cys-111, and Cys-115 each coordinate [4Fe-4S] cluster.

[4Fe-4S] cluster is required as a cofactor.

This is an uncharacterized protein from Methanocaldococcus jannaschii (strain ATCC 43067 / DSM 2661 / JAL-1 / JCM 10045 / NBRC 100440) (Methanococcus jannaschii).